A 115-amino-acid polypeptide reads, in one-letter code: uncharacterized protein (115 aa).

The interval 1–86 is disordered; that stretch reads RRPARSGGDG…LSSQLVRPSR (86 aa).

This is an uncharacterized protein from Homo sapiens (Human).